The following is a 267-amino-acid chain: Cell division protein FtsQ (267 aa).

The Cytoplasmic portion of the chain corresponds to Met-1–Ala-32. A helical membrane pass occupies residues Ile-33–Phe-53. Residues Ala-54–Tyr-267 lie on the Periplasmic side of the membrane. In terms of domain architecture, POTRA spans Phe-73–Arg-141.

Belongs to the FtsQ/DivIB family. FtsQ subfamily.

Its subcellular location is the cell inner membrane. Functionally, essential cell division protein. This is Cell division protein FtsQ from Rickettsia felis (strain ATCC VR-1525 / URRWXCal2) (Rickettsia azadi).